The sequence spans 372 residues: 4-hydroxy-3-methylbut-2-en-1-yl diphosphate synthase (flavodoxin) (372 aa).

Residues cysteine 270, cysteine 273, cysteine 305, and glutamate 312 each coordinate [4Fe-4S] cluster.

This sequence belongs to the IspG family. It depends on [4Fe-4S] cluster as a cofactor.

The catalysed reaction is (2E)-4-hydroxy-3-methylbut-2-enyl diphosphate + oxidized [flavodoxin] + H2O + 2 H(+) = 2-C-methyl-D-erythritol 2,4-cyclic diphosphate + reduced [flavodoxin]. It participates in isoprenoid biosynthesis; isopentenyl diphosphate biosynthesis via DXP pathway; isopentenyl diphosphate from 1-deoxy-D-xylulose 5-phosphate: step 5/6. Converts 2C-methyl-D-erythritol 2,4-cyclodiphosphate (ME-2,4cPP) into 1-hydroxy-2-methyl-2-(E)-butenyl 4-diphosphate. This Salmonella arizonae (strain ATCC BAA-731 / CDC346-86 / RSK2980) protein is 4-hydroxy-3-methylbut-2-en-1-yl diphosphate synthase (flavodoxin).